The sequence spans 945 residues: Isoleucine--tRNA ligase 1 (945 aa).

A 'HIGH' region motif is present at residues P66–H76. E581 contributes to the L-isoleucyl-5'-AMP binding site. The 'KMSKS' region signature appears at K622–S626. An ATP-binding site is contributed by K625. Positions 908, 911, 928, and 931 each coordinate Zn(2+).

The protein belongs to the class-I aminoacyl-tRNA synthetase family. IleS type 1 subfamily. Monomer. The cofactor is Zn(2+).

The protein localises to the cytoplasm. The catalysed reaction is tRNA(Ile) + L-isoleucine + ATP = L-isoleucyl-tRNA(Ile) + AMP + diphosphate. In terms of biological role, catalyzes the attachment of isoleucine to tRNA(Ile). As IleRS can inadvertently accommodate and process structurally similar amino acids such as valine, to avoid such errors it has two additional distinct tRNA(Ile)-dependent editing activities. One activity is designated as 'pretransfer' editing and involves the hydrolysis of activated Val-AMP. The other activity is designated 'posttransfer' editing and involves deacylation of mischarged Val-tRNA(Ile). In Burkholderia mallei (strain ATCC 23344), this protein is Isoleucine--tRNA ligase 1.